Consider the following 202-residue polypeptide: Large ribosomal subunit protein uL18 (202 aa).

The protein belongs to the universal ribosomal protein uL18 family. Part of the 50S ribosomal subunit. Contacts the 5S and 23S rRNAs.

Its function is as follows. This is one of the proteins that bind and probably mediate the attachment of the 5S RNA into the large ribosomal subunit, where it forms part of the central protuberance. The sequence is that of Large ribosomal subunit protein uL18 from Staphylothermus marinus (strain ATCC 43588 / DSM 3639 / JCM 9404 / F1).